Consider the following 355-residue polypeptide: NADH-quinone oxidoreductase subunit H (355 aa).

8 helical membrane-spanning segments follow: residues 25 to 45 (IVRI…LILW), 91 to 111 (WLYL…WAVI), 126 to 146 (LLYA…AGWA), 170 to 190 (MGFA…SEIV), 205 to 225 (FLSW…ISGI), 252 to 272 (GMAF…ISAL), 290 to 310 (FIPG…VFIW), and 330 to 350 (VFLP…MSPL).

Belongs to the complex I subunit 1 family. As to quaternary structure, NDH-1 is composed of 14 different subunits. Subunits NuoA, H, J, K, L, M, N constitute the membrane sector of the complex.

It localises to the cell inner membrane. The enzyme catalyses a quinone + NADH + 5 H(+)(in) = a quinol + NAD(+) + 4 H(+)(out). NDH-1 shuttles electrons from NADH, via FMN and iron-sulfur (Fe-S) centers, to quinones in the respiratory chain. The immediate electron acceptor for the enzyme in this species is believed to be ubiquinone. Couples the redox reaction to proton translocation (for every two electrons transferred, four hydrogen ions are translocated across the cytoplasmic membrane), and thus conserves the redox energy in a proton gradient. This subunit may bind ubiquinone. The sequence is that of NADH-quinone oxidoreductase subunit H from Burkholderia lata (strain ATCC 17760 / DSM 23089 / LMG 22485 / NCIMB 9086 / R18194 / 383).